Here is a 126-residue protein sequence, read N- to C-terminus: Bactofilin BacO (126 aa).

Belongs to the bactofilin family. In terms of assembly, interacts with BacN and probably also BacP, the 3 proteins colocalize as an extended structure. Interacts with PadC.

Its subcellular location is the cytoplasm. It localises to the cytoskeleton. A non-essential component of the chromosome segregation machinery. Positions the ParA-ParB-parS chromosome segregation machinery within the cell; BacP seems to be the most important bactofilin in this process. Forms a heteropolymeric, subpolar scaffold in the cell; BacP probably forms the core, BacO contributes to position and integrity while BacN does not seem to contribute to assembly. The protein is Bactofilin BacO of Myxococcus xanthus (strain DK1622).